The following is a 349-amino-acid chain: Isopentenyl-diphosphate delta-isomerase (349 aa).

Substrate is bound at residue 6 to 7; that stretch reads RK. FMN-binding positions include 62-64, S93, and N122; that span reads AMT. Residue Q152 coordinates substrate. E153 provides a ligand contact to Mg(2+). FMN-binding positions include K184, T214, 258–259, and 280–281; these read GG and AG.

The protein belongs to the IPP isomerase type 2 family. Homooctamer. Dimer of tetramers. The cofactor is FMN. It depends on NADPH as a cofactor. Requires Mg(2+) as cofactor.

It is found in the cytoplasm. The enzyme catalyses isopentenyl diphosphate = dimethylallyl diphosphate. In terms of biological role, involved in the biosynthesis of isoprenoids. Catalyzes the 1,3-allylic rearrangement of the homoallylic substrate isopentenyl (IPP) to its allylic isomer, dimethylallyl diphosphate (DMAPP). The polypeptide is Isopentenyl-diphosphate delta-isomerase (Bacillus subtilis (strain 168)).